Here is a 295-residue protein sequence, read N- to C-terminus: Glutamyl-Q tRNA(Asp) synthetase (295 aa).

L-glutamate is bound by residues 9-13 and Glu-45; that span reads RFAPT. A 'HIGH' region motif is present at residues 12-22; the sequence is PTPSGFLHFGS. Zn(2+)-binding residues include Cys-101, Cys-103, Tyr-115, and Cys-119. Residues Tyr-172 and Arg-190 each coordinate L-glutamate. Residues 228 to 232 carry the 'KMSKS' region motif; that stretch reads KLGKS. Residue Lys-231 coordinates ATP.

The protein belongs to the class-I aminoacyl-tRNA synthetase family. GluQ subfamily. The cofactor is Zn(2+).

In terms of biological role, catalyzes the tRNA-independent activation of glutamate in presence of ATP and the subsequent transfer of glutamate onto a tRNA(Asp). Glutamate is transferred on the 2-amino-5-(4,5-dihydroxy-2-cyclopenten-1-yl) moiety of the queuosine in the wobble position of the QUC anticodon. This is Glutamyl-Q tRNA(Asp) synthetase from Pseudomonas entomophila (strain L48).